The chain runs to 612 residues: Cryptochrome-2 (612 aa).

Residues methionine 1–isoleucine 485 are CNT2, binds chromophores to sense blue light and mediate CRY dimerization. The Photolyase/cryptochrome alpha/beta domain occupies lysine 5 to leucine 134. Residue tyrosine 232 coordinates FAD. Positions 235 and 243 each coordinate Mg(2+). An FAD-binding site is contributed by threonine 244–serine 248. Histidine 355 provides a ligand contact to Mg(2+). Residues asparagine 356 and aspartate 387–aspartate 389 contribute to the FAD site. Asparagine 356 to arginine 357 provides a ligand contact to ATP. Aspartate 406 contributes to the ATP binding site. Residues serine 486–lysine 612 are CCT2/CCE2, mediates blue light signaling. The segment at glycine 539–valine 576 is disordered. The short motif at lysine 541–lysine 555 is the Nuclear localization signal element. A compositionally biased stretch (basic and acidic residues) spans arginine 551–leucine 564. Phosphoserine; by CK1 is present on serine 587. Residues lysine 590–lysine 612 form a disordered region. Residues glutamine 596–lysine 612 show a composition bias toward polar residues. Phosphoserine occurs at positions 598 and 599. Threonine 603 carries the post-translational modification Phosphothreonine; by CK1. Serine 605 bears the Phosphoserine mark.

The protein belongs to the DNA photolyase class-1 family. Homodimer. Blue-light dependent dimerization. Interacts with COP1 and PHYB in the nucleus. Binds reversibly to CIBs proteins such as BHLH63/CIB1, BHLH78/CIB2, BHLH74/CIB4 and BHLH76/CIB5 after blue light illumination to stimulate their transcription factor activities. Interacts with PIF4 and PIF5 in the nucleus in response to low blue light (LBL). Binds to SPA1 in response to blue light, this interaction prevents SPA1/COP1 complex formation but stimulates interaction with COP1, and thus avoid COP1-dependent degradation of the transcription factors CO and HY5 by the proteasome and promotes hypocotyl elongation and floral initiation. Binding to ATP mediates conformational changes which facilitate flavin binding. Interacts with BIC1 in both darkness and light. Interacts with NRP. It depends on FAD as a cofactor. (6R)-5,10-methylene-5,6,7,8-tetrahydrofolate serves as cofactor. Phosphorylated by CK1.3 and CK1.4; in response to blue light. Required for degradation. Adopts an open conformation when phosphorylated upon photoexcitation and thus interacts with signaling partner proteins. Not autophosphorylated, even in complex with FAD cofactor. In terms of processing, ubiquitinated; in response to blue light. In terms of tissue distribution, mostly expressed in the shoot meristems and root tips, and, to a lower extent, in the cotyledons, hypocotyls, and roots.

It localises to the nucleus. It is found in the PML body. The protein localises to the cytoplasm. Functionally, photoreceptor that mediates primarily blue light inhibition of hypocotyl elongation and photoperiodic control of floral initiation, and regulates other light responses, including circadian rhythms, tropic growth, stomata opening, guard cell development, root development, bacterial and viral pathogen responses, abiotic stress responses, cell cycles, programmed cell death, apical dominance, fruit and ovule development, seed dormancy, and magnetoreception. Photoexcited cryptochromes interact with signaling partner proteins to alter gene expression at both transcriptional and post-translational levels and, consequently, regulate the corresponding metabolic and developmental programs. Blue-light absorbing flavoprotein that activates reversible flavin photoreduction via an electron transport chain comprising a tryptophan triad (W-321, W-374 and W-397), or via an alternative electron transport that involves small metabolites, including NADPH, NADH, and ATP. The half-life of the activated signaling state is about 16 minutes. Perceives low blue light (LBL) and responds by directly contacting two bHLH transcription factors, PIF4 and PIF5, at chromatin on E-box variant 5'-CA[CT]GTG-3' to promote their activity and stimulate specific gene expression to adapt global physiology (e.g. hypocotyl elongation and hyponastic growth in low blue light). In response to blue light, binds to CIB proteins (e.g. BHLH63/CIB1 and BHLH76/CIB5) to activate transcription and floral initiation. Mediates blue light-induced gene expression, floral initiation and hypocotyl elongation through the interaction with SPA1 that prevents formation of SPA1/COP1 complex but stimulates COP1 binding, and thus inhibits COP1-mediated degradation of transcription factors (e.g. CO and HY5). Promotes flowering time in continuous light (LL). Involved in shortening the circadian clock period, especially at 27 degrees Celsius, in blue light (BL). Required to maintain clock genes expression rhythm. Triggers nuclear accumulation of ROS in response to blue light illumination. Involved in blue light-dependent stomatal opening, transpiration and inhibition of stem and root growth, probably by regulating abscisic acid (ABA). Regulates the timing of flowering by promoting the expression of 'FLOWERING LOCUS T' (FT) in vascular bundles. Negatively regulated by 'FLOWERING LOCUS C' (FLC). General positive regulator of reversible low light-induced chromatin decompaction. Involved in triggering chromatin decondensation during floral transition. Together with phototropins, involved in phototropism regulation by various blue light fluence; blue light attenuates phototropism in high fluence rates (100 umol.m-2.s-1) but enhances phototropism in low fluence rates (&lt;1.0 umol.m-2.s-1). The effect of near-null magnetic field on flowering is altered by changes of blue light cycle and intensity in a CRY1/CRY2-dependent manner. Involved in the strigolactone signaling that regulates hypocotyl growth in response to blue light. Confers resistance to turnip crinkle virus (TCV) by preventing COP1-mediated proteasome-mediated degradation of RPP8/HRT, thus promoting its stability in light. Exposure to darkness or blue-light induces degradation of CRY2, and in turn of RPP8/HRT, resulting in susceptibility to TCV. In Arabidopsis thaliana (Mouse-ear cress), this protein is Cryptochrome-2.